The chain runs to 306 residues: D-alanine--D-alanine ligase B (306 aa).

Residues E15 and S150 contribute to the active site. The region spanning 101–303 is the ATP-grasp domain; it reads KLLWQGAGLP…FSQLVVRILE (203 aa). ATP is bound at residue 134–189; it reads ISALGLPVIVKPSREGSSVGMSKVVAENALQDALRLAFQHDEEVLIEKWLSGPEFT. Mg(2+)-binding residues include D257, E270, and N272. The active site involves S281.

The protein belongs to the D-alanine--D-alanine ligase family. As to quaternary structure, monomer. It depends on Mg(2+) as a cofactor. The cofactor is Mn(2+).

It is found in the cytoplasm. The catalysed reaction is 2 D-alanine + ATP = D-alanyl-D-alanine + ADP + phosphate + H(+). It participates in cell wall biogenesis; peptidoglycan biosynthesis. In terms of biological role, cell wall formation. This is D-alanine--D-alanine ligase B (ddlB) from Escherichia coli O157:H7.